The sequence spans 128 residues: Sulfurtransferase TusD (128 aa).

Catalysis depends on Cys78, which acts as the Cysteine persulfide intermediate.

This sequence belongs to the DsrE/TusD family. Heterohexamer, formed by a dimer of trimers. The hexameric TusBCD complex contains 2 copies each of TusB, TusC and TusD. The TusBCD complex interacts with TusE.

It is found in the cytoplasm. In terms of biological role, part of a sulfur-relay system required for 2-thiolation of 5-methylaminomethyl-2-thiouridine (mnm(5)s(2)U) at tRNA wobble positions. Accepts sulfur from TusA and transfers it in turn to TusE. The protein is Sulfurtransferase TusD of Buchnera aphidicola subsp. Schizaphis graminum (strain Sg).